The following is a 426-amino-acid chain: MYVLKNGQVLNASGELENKDVLIQNGKVNLIADSIEVTSGEEFDATGKLIAPGFIDVHVHLREPGGEHKETILTGTQAAARGGYTTICSMPNTKPVPDSKEVMENLQAKIKETAEVRVLPYASITTSLGTDELVDFEALKEAGAFAFTDDGVGVQLAGTMYEAMKRAAALDMAIVAHCEDNSLIYGGVVHDGIFAEKEGLKGIPNIAESVQIARDVLLAEAAGCHYHVCHISTKESVRVVRDAKRAGIRVTAEVSPHHLILDEEAIPGNDGNWKMNPPLRSKADRAALLEGLLDGTIDFIATDHAPHAAEEKNVPMEQAAFGIVGLETGFPLLYTHFVKTNEWTLKQLIDWMTVKPAECFKLPYGKLEEGSVADIVVLDLEKEATIDPATFYSKGKNTPFVGETCIGWPVATFAEGTLVYNEGEIK.

Positions 58 and 60 each coordinate Zn(2+). Residues H60–R62 and N92 contribute to the substrate site. The Zn(2+) site is built by D150, H177, and H230. N276 is a binding site for substrate. Position 303 (D303) interacts with Zn(2+). D303 is a catalytic residue. Substrate is bound by residues H307 and F321 to G322.

This sequence belongs to the metallo-dependent hydrolases superfamily. DHOase family. Class I DHOase subfamily. Requires Zn(2+) as cofactor.

It catalyses the reaction (S)-dihydroorotate + H2O = N-carbamoyl-L-aspartate + H(+). It participates in pyrimidine metabolism; UMP biosynthesis via de novo pathway; (S)-dihydroorotate from bicarbonate: step 3/3. Functionally, catalyzes the reversible cyclization of carbamoyl aspartate to dihydroorotate. This Listeria monocytogenes serotype 4a (strain HCC23) protein is Dihydroorotase.